The following is a 184-amino-acid chain: ATP synthase subunit b, chloroplastic (184 aa).

A helical membrane pass occupies residues 27–49 (LATNPINLSVVLGVLIFFGKGVL).

Belongs to the ATPase B chain family. F-type ATPases have 2 components, F(1) - the catalytic core - and F(0) - the membrane proton channel. F(1) has five subunits: alpha(3), beta(3), gamma(1), delta(1), epsilon(1). F(0) has four main subunits: a(1), b(1), b'(1) and c(10-14). The alpha and beta chains form an alternating ring which encloses part of the gamma chain. F(1) is attached to F(0) by a central stalk formed by the gamma and epsilon chains, while a peripheral stalk is formed by the delta, b and b' chains.

It is found in the plastid. Its subcellular location is the chloroplast thylakoid membrane. In terms of biological role, f(1)F(0) ATP synthase produces ATP from ADP in the presence of a proton or sodium gradient. F-type ATPases consist of two structural domains, F(1) containing the extramembraneous catalytic core and F(0) containing the membrane proton channel, linked together by a central stalk and a peripheral stalk. During catalysis, ATP synthesis in the catalytic domain of F(1) is coupled via a rotary mechanism of the central stalk subunits to proton translocation. Its function is as follows. Component of the F(0) channel, it forms part of the peripheral stalk, linking F(1) to F(0). This chain is ATP synthase subunit b, chloroplastic, found in Populus alba (White poplar).